Consider the following 382-residue polypeptide: Anhydro-N-acetylmuramic acid kinase (382 aa).

9-16 (GTSLDGID) contributes to the ATP binding site.

This sequence belongs to the anhydro-N-acetylmuramic acid kinase family.

It catalyses the reaction 1,6-anhydro-N-acetyl-beta-muramate + ATP + H2O = N-acetyl-D-muramate 6-phosphate + ADP + H(+). The protein operates within amino-sugar metabolism; 1,6-anhydro-N-acetylmuramate degradation. It functions in the pathway cell wall biogenesis; peptidoglycan recycling. Its function is as follows. Catalyzes the specific phosphorylation of 1,6-anhydro-N-acetylmuramic acid (anhMurNAc) with the simultaneous cleavage of the 1,6-anhydro ring, generating MurNAc-6-P. Is required for the utilization of anhMurNAc either imported from the medium or derived from its own cell wall murein, and thus plays a role in cell wall recycling. This chain is Anhydro-N-acetylmuramic acid kinase, found in Bacillus cereus (strain ZK / E33L).